The sequence spans 342 residues: Bifunctional terpene synthase Agr4 (342 aa).

Mg(2+)-binding residues include Asp87, Asn222, Ser226, and Glu230. The DDXXD motif signature appears at Asp87–Asp91. (2E,6E)-farnesyl diphosphate is bound by residues Arg308 and Tyr309.

This sequence belongs to the terpene synthase family. The cofactor is Mg(2+).

The enzyme catalyses (2E,6E)-farnesyl diphosphate = delta-cadinene + diphosphate. It carries out the reaction (2E,6E)-farnesyl diphosphate = gamma-muurolene + diphosphate. It catalyses the reaction (2E,6E)-farnesyl diphosphate = beta-copaene + diphosphate. The catalysed reaction is (2E)-geranyl diphosphate = beta-myrcene + diphosphate. Terpene cyclase that catalyzes the cyclization of farnesyl diphosphate (FPP) to various sesquiterpenes, including beta-copaene, alpha-cubebene, cadina-1(6),4-diene, gamma-muurolene, delta-cadinene, epizonarene, epicubenol and cubenol. Agr4 is also able to use the monoterpene precursor geranyl diphosphate (GPP) as substrates to synthesize the monoterpene beta-myrcene. Delta-cadinene is the major product of Agr4. The sequence is that of Bifunctional terpene synthase Agr4 from Cyclocybe aegerita (Black poplar mushroom).